The primary structure comprises 158 residues: Crossover junction endodeoxyribonuclease RuvC (158 aa).

Catalysis depends on residues Asp-7, Glu-66, and Asp-139. 3 residues coordinate Mg(2+): Asp-7, Glu-66, and Asp-139.

Belongs to the RuvC family. In terms of assembly, homodimer which binds Holliday junction (HJ) DNA. The HJ becomes 2-fold symmetrical on binding to RuvC with unstacked arms; it has a different conformation from HJ DNA in complex with RuvA. In the full resolvosome a probable DNA-RuvA(4)-RuvB(12)-RuvC(2) complex forms which resolves the HJ. Requires Mg(2+) as cofactor.

Its subcellular location is the cytoplasm. It carries out the reaction Endonucleolytic cleavage at a junction such as a reciprocal single-stranded crossover between two homologous DNA duplexes (Holliday junction).. In terms of biological role, the RuvA-RuvB-RuvC complex processes Holliday junction (HJ) DNA during genetic recombination and DNA repair. Endonuclease that resolves HJ intermediates. Cleaves cruciform DNA by making single-stranded nicks across the HJ at symmetrical positions within the homologous arms, yielding a 5'-phosphate and a 3'-hydroxyl group; requires a central core of homology in the junction. The consensus cleavage sequence is 5'-(A/T)TT(C/G)-3'. Cleavage occurs on the 3'-side of the TT dinucleotide at the point of strand exchange. HJ branch migration catalyzed by RuvA-RuvB allows RuvC to scan DNA until it finds its consensus sequence, where it cleaves and resolves the cruciform DNA. This chain is Crossover junction endodeoxyribonuclease RuvC, found in Campylobacter lari (strain RM2100 / D67 / ATCC BAA-1060).